The sequence spans 153 residues: Arachidonate 5-lipoxygenase-activating protein (153 aa).

Topologically, residues 1–8 are lumenal; sequence MDQEAMGN. A helical transmembrane segment spans residues 9-30; the sequence is IVLLAIVTLISVVQNAFFAHKV. Residues 31–52 are Cytoplasmic-facing; it reads EHESKTHNGRSFQRTGTPAFER. A helical transmembrane segment spans residues 53–77; it reads VYTANQNCVDAYPTFLVVLWSAGLF. The Lumenal portion of the chain corresponds to 78 to 80; that stretch reads CSQ. A helical membrane pass occupies residues 81 to 102; that stretch reads VPAAFAGLMYLFVRQKYFVGYL. The Cytoplasmic portion of the chain corresponds to 103–107; that stretch reads GERTQ. An intramembrane segment occupies 108-115; the sequence is STPGYIFG. A helical transmembrane segment spans residues 116-128; the sequence is KRIILFLFLMSLA. The Lumenal portion of the chain corresponds to 129–153; the sequence is GIFNYFLILFFGSDFENYIKTITTT.

Belongs to the MAPEG family. Homotrimer. Interacts with LTC4S and ALOX5.

The protein resides in the nucleus membrane. The protein localises to the endoplasmic reticulum membrane. In terms of biological role, required for leukotriene biosynthesis by ALOX5 (5-lipoxygenase). Anchors ALOX5 to the membrane. Binds arachidonic acid, and could play an essential role in the transfer of arachidonic acid to ALOX5. Binds to MK-886, a compound that blocks the biosynthesis of leukotrienes. This is Arachidonate 5-lipoxygenase-activating protein (ALOX5AP) from Sus scrofa (Pig).